Consider the following 1938-residue polypeptide: Myosin-6 (1938 aa).

Residues 31-80 form the Myosin N-terminal SH3-like domain; it reads DIRTECFVPDDKEEYVKAKIVSREGGKVTAETENGKTVTVKEDQVMQQNP. Residues 84 to 779 enclose the Myosin motor domain; that stretch reads DKIEDMAMLT…LLGLLEEMRD (696 aa). N6,N6,N6-trimethyllysine is present on Lys128. 177 to 184 serves as a coordination point for ATP; it reads GESGAGKT. A Phosphothreonine modification is found at Thr378. Residue Ser416 is modified to Phosphoserine. 2 actin-binding regions span residues 656-678 and 758-772; these read LNKL…IPNE and KFGH…GLLG. Positions 782-811 constitute an IQ domain; sequence LSRIITRIQAQARGQLMRIEFKKMVERRDA. Calmodulin-binding stretches follow at residues 789–806 and 815–832; these read IQAQ…KKMV and IQWN…PWMK. A coiled-coil region spans residues 842–1938; it reads KSAETEKEMA…GAKQKMHDEE (1097 aa). A phosphoserine mark is found at Ser1089 and Ser1138. Tyr1260 carries the phosphotyrosine modification. Ser1270 carries the post-translational modification Phosphoserine. Phosphothreonine is present on residues Thr1276 and Thr1283. Ser1308 is modified (phosphoserine). Tyr1309 carries the post-translational modification Phosphotyrosine. Thr1310 is modified (phosphothreonine). Ser1511 carries the phosphoserine modification. Thr1514 and Thr1680 each carry phosphothreonine. The disordered stretch occupies residues 1907–1938; that stretch reads AEERADIAESQVNKLRAKSRDIGAKQKMHDEE. Residues 1924 to 1938 show a composition bias toward basic and acidic residues; the sequence is KSRDIGAKQKMHDEE.

This sequence belongs to the TRAFAC class myosin-kinesin ATPase superfamily. Myosin family. As to quaternary structure, muscle myosin is a hexameric protein that consists of 2 heavy chain subunits (MHC), 2 alkali light chain subunits (MLC) and 2 regulatory light chain subunits (MLC-2).

Its subcellular location is the cytoplasm. It is found in the myofibril. Functionally, muscle contraction. This chain is Myosin-6 (Myh6), found in Rattus norvegicus (Rat).